Reading from the N-terminus, the 51-residue chain is Large ribosomal subunit protein eL39 (51 aa).

It belongs to the eukaryotic ribosomal protein eL39 family. In terms of assembly, component of the large ribosomal subunit. Interacts with IMPACT.

It is found in the cytoplasm. In terms of biological role, RNA-binding component of the large ribosomal subunit. The ribosome is a large ribonucleoprotein complex responsible for the synthesis of proteins in the cell. This Mus musculus (Mouse) protein is Large ribosomal subunit protein eL39 (Rpl39).